The following is a 391-amino-acid chain: Multidrug resistance protein MdtL (391 aa).

Residues 1–3 (MSR) are Cytoplasmic-facing. Residues 4-24 (FLICSFALVLLYPAGIDMYLV) traverse the membrane as a helical segment. Residues 25 to 41 (GLPRIAADLNASEAQLH) lie on the Periplasmic side of the membrane. A helical transmembrane segment spans residues 42–62 (IAFSVYLAGMAAAMLFAGKVA). Residues 63–68 (DRSGRK) lie on the Cytoplasmic side of the membrane. Residues 69 to 89 (PVAIPGAALFIIASVFCSLAE) form a helical membrane-spanning segment. Over 90–92 (TSA) the chain is Periplasmic. The chain crosses the membrane as a helical span at residues 93 to 113 (LFLAGRFLQGLGAGCCYVVAF). Over 114–130 (AILRDTLDDRRRAKVLS) the chain is Cytoplasmic. Residues 131-151 (LLNGITCIIPVLAPVLGHLIM) form a helical membrane-spanning segment. The Periplasmic portion of the chain corresponds to 152–157 (LKFPWQ). The helical transmembrane segment at 158 to 178 (SLFWTMATMGIAVLMLSLFIL) threads the bilayer. The Cytoplasmic segment spans residues 179 to 202 (KETRPAAPAASDKPRENSESLLNR). The chain crosses the membrane as a helical span at residues 203 to 222 (FFLSRVVITTLSVSVILTFV). The Periplasmic segment spans residues 223–244 (NTSPVLLMEIMGFERGEYATIM). Residues 245–265 (ALTAGVSMTVSFSTPFALGIF) traverse the membrane as a helical segment. At 266 to 268 (KPR) the chain is on the cytoplasmic side. A helical membrane pass occupies residues 269–289 (TLMITSQVLFLAAGITLAVSP). Residues 290-292 (SHA) are Periplasmic-facing. A helical transmembrane segment spans residues 293-313 (VSLFGITLICAGFSVGFGVAM). Topologically, residues 314-330 (SQALGPFSLRAGVASST) are cytoplasmic. Residues 331 to 351 (LGIAQVCGSSLWIWLAAVVGI) traverse the membrane as a helical segment. Topologically, residues 352–355 (GAWN) are periplasmic. Residues 356–376 (MLIGILIACSIVSLLLIMFVA) form a helical membrane-spanning segment. Over 377 to 391 (PGRPVAAHEEIHHHA) the chain is Cytoplasmic.

This sequence belongs to the major facilitator superfamily. DHA1 family. MdtL (TC 2.A.1.2.22) subfamily.

The protein localises to the cell inner membrane. Its function is as follows. Confers resistance to chloramphenicol. This chain is Multidrug resistance protein MdtL, found in Escherichia coli O6:K15:H31 (strain 536 / UPEC).